The primary structure comprises 237 residues: Ribosomal RNA small subunit methyltransferase G (237 aa).

The disordered stretch occupies residues 1-25 (MASRHSPQTAAQPDAADKAQALRLT). Residues 7 to 21 (PQTAAQPDAADKAQA) show a composition bias toward low complexity. 3 residues coordinate S-adenosyl-L-methionine: Gly85, Phe90, and Arg155.

Belongs to the methyltransferase superfamily. RNA methyltransferase RsmG family.

The protein localises to the cytoplasm. It carries out the reaction guanosine(527) in 16S rRNA + S-adenosyl-L-methionine = N(7)-methylguanosine(527) in 16S rRNA + S-adenosyl-L-homocysteine. Its function is as follows. Specifically methylates the N7 position of guanine in position 527 of 16S rRNA. This is Ribosomal RNA small subunit methyltransferase G from Rhodopseudomonas palustris (strain HaA2).